The following is a 371-amino-acid chain: Probable dual-specificity RNA methyltransferase RlmN (371 aa).

Residue glutamate 114 is the Proton acceptor of the active site. Positions 120–346 (DGPRRSICVS…ESAGVNVNFR (227 aa)) constitute a Radical SAM core domain. The cysteines at positions 127 and 357 are disulfide-linked. Residues cysteine 134, cysteine 138, and cysteine 141 each coordinate [4Fe-4S] cluster. S-adenosyl-L-methionine is bound by residues 183-184 (GE), serine 215, 238-240 (SLH), and asparagine 314. Cysteine 357 functions as the S-methylcysteine intermediate in the catalytic mechanism.

Belongs to the radical SAM superfamily. RlmN family. [4Fe-4S] cluster is required as a cofactor.

It localises to the cytoplasm. The catalysed reaction is adenosine(2503) in 23S rRNA + 2 reduced [2Fe-2S]-[ferredoxin] + 2 S-adenosyl-L-methionine = 2-methyladenosine(2503) in 23S rRNA + 5'-deoxyadenosine + L-methionine + 2 oxidized [2Fe-2S]-[ferredoxin] + S-adenosyl-L-homocysteine. The enzyme catalyses adenosine(37) in tRNA + 2 reduced [2Fe-2S]-[ferredoxin] + 2 S-adenosyl-L-methionine = 2-methyladenosine(37) in tRNA + 5'-deoxyadenosine + L-methionine + 2 oxidized [2Fe-2S]-[ferredoxin] + S-adenosyl-L-homocysteine. In terms of biological role, specifically methylates position 2 of adenine 2503 in 23S rRNA and position 2 of adenine 37 in tRNAs. This is Probable dual-specificity RNA methyltransferase RlmN from Rhodopirellula baltica (strain DSM 10527 / NCIMB 13988 / SH1).